Here is a 62-residue protein sequence, read N- to C-terminus: Ferredoxin-1 (62 aa).

2 consecutive 4Fe-4S ferredoxin-type domains span residues 2–28 (ALYI…SAGS) and 29–62 (EIYV…IVQG). Positions 9, 12, 15, 19, 38, 41, 50, and 54 each coordinate [4Fe-4S] cluster.

It depends on [4Fe-4S] cluster as a cofactor.

In terms of biological role, ferredoxins are iron-sulfur proteins that transfer electrons in a wide variety of metabolic reactions. The polypeptide is Ferredoxin-1 (Chlorobaculum tepidum (strain ATCC 49652 / DSM 12025 / NBRC 103806 / TLS) (Chlorobium tepidum)).